The following is a 51-amino-acid chain: Large ribosomal subunit protein eL39 (51 aa).

The span at 1 to 19 (MSHNMKGQKKRLAKAHKQN) shows a compositional bias: basic residues. Positions 1 to 23 (MSHNMKGQKKRLAKAHKQNSRVP) are disordered.

It belongs to the eukaryotic ribosomal protein eL39 family.

The chain is Large ribosomal subunit protein eL39 from Methanosarcina mazei (strain ATCC BAA-159 / DSM 3647 / Goe1 / Go1 / JCM 11833 / OCM 88) (Methanosarcina frisia).